A 465-amino-acid chain; its full sequence is MSCLRQSSQSFYFTQIRWKTVKFKTKIAKTKPLKTPSAQALDHFDFYYGPLFGKKWPSIRLGLLSPNRYLAVMNTMSRNWQAHDEILSDMGAKDLLASIRGKAEDQAIETKRKSVEEKANRETQKVKHEISNPSTSTNTEDSEPDEAIFRSAAGLGEFRASAGELSSGSLQMGLGQSNQNKNVEITGFEGEGVRIPKRDHFFYYPQALHVRSFDRAVLLDFPAPMKDEVGVPSYWLLDGGSLLPVLALGLQKDDSLLDMCAAPGGKSLLAALSNLPSKIVCNDFKLARLGQLKRALMTYVPEDSETIDKFVLKRKDASDVKTWDEFEAYDKVLVDVPCSTDRLSVSTDDGNLFSTGSTQQRLDLPVLQTKILVNALRSVKVGGSVVYSTCTLSPSQNEAVVENAVAVVRNDFGIVTVEESLHQLVSHMTSSGLYRFHDTPLGALVVPFLPSNFGPMYICKLTRLQ.

The transit peptide at Met-1–Gln-6 directs the protein to the mitochondrion. Residues Gln-106–Ile-130 are compositionally biased toward basic and acidic residues. A disordered region spans residues Gln-106–Asp-145. Residues Cys-260–Lys-266, Asp-283, Asp-316, and Asp-335 each bind S-adenosyl-L-methionine. Cys-390 functions as the Nucleophile in the catalytic mechanism.

The protein belongs to the class I-like SAM-binding methyltransferase superfamily. RsmB/NOP family.

It is found in the mitochondrion. It carries out the reaction a cytidine in rRNA + S-adenosyl-L-methionine = a 5-methylcytidine in rRNA + S-adenosyl-L-homocysteine + H(+). The catalysed reaction is a cytidine in tRNA + S-adenosyl-L-methionine = a 5-methylcytidine in tRNA + S-adenosyl-L-homocysteine + H(+). In terms of biological role, mitochondrial methyltransferase which methylates cytosine to 5-methylcytosine (m5C) in rRNAs and tRNAs at multiple sites. May play a role in the translation of leucine and proline codons. In Caenorhabditis elegans, this protein is 5-cytosine rRNA methyltransferase nsun-4.